The sequence spans 205 residues: Protein N-terminal glutamine amidohydrolase (205 aa).

Residues C20, H74, and D90 contribute to the active site.

Belongs to the NTAQ1 family. Monomer.

The catalysed reaction is N-terminal L-glutaminyl-[protein] + H2O = N-terminal L-glutamyl-[protein] + NH4(+). In terms of biological role, mediates the side-chain deamidation of N-terminal glutamine residues to glutamate, an important step in N-end rule pathway of protein degradation. Conversion of the resulting N-terminal glutamine to glutamate renders the protein susceptible to arginylation, polyubiquitination and degradation as specified by the N-end rule. Does not act on substrates with internal or C-terminal glutamine and does not act on non-glutamine residues in any position. The polypeptide is Protein N-terminal glutamine amidohydrolase (tun) (Drosophila erecta (Fruit fly)).